We begin with the raw amino-acid sequence, 309 residues long: UDP-3-O-acyl-N-acetylglucosamine deacetylase (309 aa).

Zn(2+)-binding residues include His-78, His-235, and Asp-239. His-262 (proton donor) is an active-site residue.

This sequence belongs to the LpxC family. Zn(2+) serves as cofactor.

The catalysed reaction is a UDP-3-O-[(3R)-3-hydroxyacyl]-N-acetyl-alpha-D-glucosamine + H2O = a UDP-3-O-[(3R)-3-hydroxyacyl]-alpha-D-glucosamine + acetate. Its pathway is glycolipid biosynthesis; lipid IV(A) biosynthesis; lipid IV(A) from (3R)-3-hydroxytetradecanoyl-[acyl-carrier-protein] and UDP-N-acetyl-alpha-D-glucosamine: step 2/6. Catalyzes the hydrolysis of UDP-3-O-myristoyl-N-acetylglucosamine to form UDP-3-O-myristoylglucosamine and acetate, the committed step in lipid A biosynthesis. The protein is UDP-3-O-acyl-N-acetylglucosamine deacetylase of Syntrophotalea carbinolica (strain DSM 2380 / NBRC 103641 / GraBd1) (Pelobacter carbinolicus).